A 90-amino-acid chain; its full sequence is Accessory gland-specific peptide 26Ab (90 aa).

A signal peptide spans 1-21; that stretch reads MNYFAVICIFSCICLWQFSDA.

In terms of tissue distribution, main cells and secondary cells of the accessory glands of 1 day old virgin males (at protein level). In 5 day old virgin males, only detected in the secondary cells (at protein level). Reappears in the main cells after mating (at protein level). First detected in adult males 3-4 hr after eclosion, levels increase reaching a peak at day 3-5 which is maintained until at least day 10 of adulthood (at protein level). In unmated male adults, levels are maintained for the first 6 days of adulthood and then gradually decrease for at least the next 8 days. No expression in females.

It is found in the secreted. The protein resides in the extracellular space. The protein localises to the cytoplasm. This protein is transferred from male to female during mating and may affect egglaying and behavior after mating. This chain is Accessory gland-specific peptide 26Ab, found in Drosophila melanogaster (Fruit fly).